Consider the following 98-residue polypeptide: C-X-C motif chemokine 10 (98 aa).

The N-terminal stretch at Met1–Gly21 is a signal peptide. Arg26 carries the post-translational modification Citrulline. Cystine bridges form between Cys30-Cys57 and Cys32-Cys74.

Belongs to the intercrine alpha (chemokine CxC) family.

It is found in the secreted. Its function is as follows. Chemotactic for monocytes and T-lymphocytes. Binds to CXCR3. This chain is C-X-C motif chemokine 10 (CXCL10), found in Macaca mulatta (Rhesus macaque).